Consider the following 238-residue polypeptide: MSINWIKITERAREGIKIINALPYETFTTVLFYTHRQMSPSVASASATSSTVGTSVTTTGRVDSSTEENPTSNTEPEYTLEELERLVGVPRQDFLLLIKTFSYILRRISTFIIKPSLLQRELREKLQLEDEAKIDAILRLWVRETTPIMNNLASKRYESNVIEDVAWKLNMEISSHCQQREKTPLAVLQMKTAVGEDINIEMTQPELMELYNQFESIQGELDAMLAMKTTGATAPGNQ.

Positions 43 to 77 (ASASATSSTVGTSVTTTGRVDSSTEENPTSNTEPE) are enriched in low complexity. A disordered region spans residues 43–78 (ASASATSSTVGTSVTTTGRVDSSTEENPTSNTEPEY). Residues 161–225 (VIEDVAWKLN…SIQGELDAML (65 aa)) form the COMM domain.

This sequence belongs to the COMM domain-containing protein 10 family. Component of the commander complex consisting of the CCC subcomplex and the retriever subcomplex. Component of the CCC subcomplex. Interacts with Smn; along with Sbat and Hez may form an accessory subcomplex involved in SMN complex function.

Functionally, scaffold protein in the commander complex that is essential for endosomal recycling of transmembrane cargos; the commander complex is composed of the CCC subcomplex and the retriever subcomplex. May modulate activity of cullin-RING E3 ubiquitin ligase (CRL) complexes. May down-regulate activation of NF-kappa-B. May have an accessory function in the survival motor neuron (SMN) complex. Required for neuromuscular function and organismal viability. The sequence is that of COMM domain-containing protein 10 homolog Vlet from Drosophila melanogaster (Fruit fly).